A 311-amino-acid chain; its full sequence is Glycine-betaine-binding protein (311 aa).

The N-terminal stretch at 1–23 (MNRLIRSLCLACAGLFAAGLAQA) is a signal peptide.

Belongs to the OsmX family.

It is found in the periplasm. In terms of biological role, binds glycine-betaine. This chain is Glycine-betaine-binding protein, found in Pseudomonas aeruginosa (strain ATCC 15692 / DSM 22644 / CIP 104116 / JCM 14847 / LMG 12228 / 1C / PRS 101 / PAO1).